The primary structure comprises 145 residues: 3-dehydroquinate dehydratase (145 aa).

Catalysis depends on Tyr-22, which acts as the Proton acceptor. Substrate is bound by residues Asn-71, His-77, and Asp-84. His-97 acts as the Proton donor in catalysis. Substrate-binding positions include 98–99 (IS) and Arg-108.

Belongs to the type-II 3-dehydroquinase family. Homododecamer.

It carries out the reaction 3-dehydroquinate = 3-dehydroshikimate + H2O. Its pathway is metabolic intermediate biosynthesis; chorismate biosynthesis; chorismate from D-erythrose 4-phosphate and phosphoenolpyruvate: step 3/7. Functionally, catalyzes a trans-dehydration via an enolate intermediate. The polypeptide is 3-dehydroquinate dehydratase (Exiguobacterium sp. (strain ATCC BAA-1283 / AT1b)).